Consider the following 158-residue polypeptide: Tryptophan-rich protein TspO (158 aa).

Helical transmembrane passes span 5 to 25 (ILTLALCIGLCLAVGFAGSTF), 48 to 68 (LFPPVWTILFIMMGTALAKVL), 79 to 99 (VGVVLFAIQLMLNLGWSASFF), 105 to 125 (LAGLVDIVLLWIFIVLTMLAF), and 134 to 154 (LLLVPYLCWVSFASYLNFTIL).

It belongs to the TspO/BZRP family.

The protein resides in the membrane. It is found in the cell membrane. In terms of biological role, binds tetrapyrroles and promotes the photooxidative degradation of protoporphyrin IX. Can bind the benzodiazepine receptor agonist PK-11195 (in vitro); this interferes with photooxidative tetrapyrrole degradation. May play a role in the transmembrane transport of tetrapyrroles and similar compounds. The protein is Tryptophan-rich protein TspO of Chlorobaculum tepidum (strain ATCC 49652 / DSM 12025 / NBRC 103806 / TLS) (Chlorobium tepidum).